Here is a 558-residue protein sequence, read N- to C-terminus: ATP synthase subunit alpha (558 aa).

Residue 172 to 179 (GDRKTGKT) coordinates ATP. The interval 536 to 558 (ESVKVHQAIPAKTSEKSKNSTPR) is disordered. The segment covering 548–558 (TSEKSKNSTPR) has biased composition (basic and acidic residues).

This sequence belongs to the ATPase alpha/beta chains family. F-type ATPases have 2 components, CF(1) - the catalytic core - and CF(0) - the membrane proton channel. CF(1) has five subunits: alpha(3), beta(3), gamma(1), delta(1), epsilon(1). CF(0) has three main subunits: a(1), b(2) and c(9-12). The alpha and beta chains form an alternating ring which encloses part of the gamma chain. CF(1) is attached to CF(0) by a central stalk formed by the gamma and epsilon chains, while a peripheral stalk is formed by the delta and b chains.

Its subcellular location is the cell membrane. It carries out the reaction ATP + H2O + 4 H(+)(in) = ADP + phosphate + 5 H(+)(out). Functionally, produces ATP from ADP in the presence of a proton gradient across the membrane. The alpha chain is a regulatory subunit. The protein is ATP synthase subunit alpha of Mycobacterium leprae (strain Br4923).